The following is a 163-amino-acid chain: Zinc finger A20 and AN1 domain-containing stress-associated protein 3 (163 aa).

An A20-type zinc finger spans residues 7–41 (LQEPRLCANNCGFFGSTATQNLCSKCFRDLQHQEQ). 4 residues coordinate Zn(2+): cysteine 13, cysteine 17, cysteine 29, and cysteine 32. The interval 57–101 (VGAAASSSVSPPPPPPADSKEIVEAKSEKRAAAEPEEADGPPQDP) is disordered. The segment covering 74–89 (DSKEIVEAKSEKRAAA) has biased composition (basic and acidic residues). The AN1-type zinc finger occupies 98–144 (PQDPKRCLTCRRRVGITGFRCRCGFVFCGTHRYAEQHECSFDFKRMG). Zn(2+) is bound by residues cysteine 104, cysteine 107, cysteine 118, cysteine 120, cysteine 125, histidine 128, histidine 134, and cysteine 136.

In terms of biological role, may be involved in environmental stress response. This chain is Zinc finger A20 and AN1 domain-containing stress-associated protein 3 (SAP3), found in Arabidopsis thaliana (Mouse-ear cress).